The sequence spans 181 residues: Peptidyl-tRNA hydrolase (181 aa).

Y14 serves as a coordination point for tRNA. The active-site Proton acceptor is the H19. Positions 62, 64, and 108 each coordinate tRNA.

This sequence belongs to the PTH family. In terms of assembly, monomer.

It is found in the cytoplasm. The enzyme catalyses an N-acyl-L-alpha-aminoacyl-tRNA + H2O = an N-acyl-L-amino acid + a tRNA + H(+). In terms of biological role, hydrolyzes ribosome-free peptidyl-tRNAs (with 1 or more amino acids incorporated), which drop off the ribosome during protein synthesis, or as a result of ribosome stalling. Catalyzes the release of premature peptidyl moieties from peptidyl-tRNA molecules trapped in stalled 50S ribosomal subunits, and thus maintains levels of free tRNAs and 50S ribosomes. This chain is Peptidyl-tRNA hydrolase, found in Campylobacter jejuni subsp. doylei (strain ATCC BAA-1458 / RM4099 / 269.97).